Here is a 244-residue protein sequence, read N- to C-terminus: MSLLDLNALNDLPKVERILALAETNAKLEKLDAEGRVAWALENLPGEYALSSSFGIQAAVSLHLVNTIRPDIPVILTDTGYLFPETYQFIDELADKLKLNLKVYRAEQSAAWQEARYGKLWEQGVEGIEKYNDINKVEPMNRALEELNVKTWFAGLRREQSGSRASLPVLGIQRGVFKVLPIIDWDNRTVYQYLQKHGLKYHPLWDQGYLSVGDTHTTRKWEPGMAEEETRFFGLKRECGLHEG.

Cysteine 239 functions as the Nucleophile; cysteine thiosulfonate intermediate in the catalytic mechanism.

Belongs to the PAPS reductase family. CysH subfamily.

The protein localises to the cytoplasm. It carries out the reaction [thioredoxin]-disulfide + sulfite + adenosine 3',5'-bisphosphate + 2 H(+) = [thioredoxin]-dithiol + 3'-phosphoadenylyl sulfate. It participates in sulfur metabolism; hydrogen sulfide biosynthesis; sulfite from sulfate: step 3/3. Functionally, catalyzes the formation of sulfite from phosphoadenosine 5'-phosphosulfate (PAPS) using thioredoxin as an electron donor. The polypeptide is Phosphoadenosine 5'-phosphosulfate reductase (Enterobacter sp. (strain 638)).